A 207-amino-acid chain; its full sequence is MTEAEQKAAFLGGLVVSFKEQMHTDVLVKPGEEAPPIPTHKAVLAARSKVFRNMLDSDECKTSPEESITLPDLSHDELKSLLEFLYSGNLKAPYNQYRSLYLAADKYDISYLQDVCRNHFIASLSSRNVLDILELASIPCDTILKDAAINHIVKHMEEVVVPMKYETFVQRNPDLSVEITRAYLRETKAKAKDHGAPLNGNTRPRIW.

Positions 24 to 94 (TDVLVKPGEE…LYSGNLKAPY (71 aa)) constitute a BTB domain.

In terms of assembly, interacts with CUL3A.

It functions in the pathway protein modification; protein ubiquitination. Functionally, may act as a substrate-specific adapter of an E3 ubiquitin-protein ligase complex (CUL3-RBX1-BTB) which mediates the ubiquitination and subsequent proteasomal degradation of target proteins. In Arabidopsis thaliana (Mouse-ear cress), this protein is BTB/POZ domain-containing protein At1g01640.